A 1596-amino-acid chain; its full sequence is Cellulose synthase 2 (1596 aa).

Residues 1 to 749 (MIYRAILKRL…RSARHGATAS (749 aa)) form a catalytic region. Transmembrane regions (helical) follow at residues 25 to 45 (SPFVMMAVGVFLMLMAGGVTI) and 106 to 126 (LSLLLVAAELYALLTLCLSYF). The segment at 145 to 238 (DWPVVDVYVP…YVVIFDCDHI (94 aa)) is catalytic subdomain A. The active site involves Asp187. Residues Asp234 and Asp236 each coordinate substrate. The catalytic subdomain B stretch occupies residues 315–375 (SAVLGIGGFA…GQRVRWARGM (61 aa)). Asp331 is an active-site residue. 4 helical membrane-spanning segments follow: residues 396 to 416 (LCYLSAMSHFLFAIPRLVFLA), 421 to 441 (FLFLGQNIIAASPFAILVYAF), 505 to 525 (FDLNAVYPNVILAVILALALV), and 544 to 564 (FALNTLWVAVSLIIVLASIAV). In terms of domain architecture, PilZ spans 570 to 669 (QIRHKPRVRA…ERQIVEFMFG (100 aa)). The segment at 750–1596 (LIVLLGLPAA…RVKDTTDASH (847 aa)) is cyclic di-GMP binding domain. Disordered stretches follow at residues 769 to 812 (SRAT…IAPA) and 828 to 868 (TGPA…APPI). Residues 783–809 (VEPPPVNAPPPPSLPQPPGTLPTPPQI) are compositionally biased toward pro residues. A helical transmembrane segment spans residues 1553–1573 (LTLYVLGLVGAGLVAAAAVRL).

It in the N-terminal section; belongs to the glycosyltransferase 2 family. In the C-terminal section; belongs to the AcsB/BcsB family.

It is found in the cell inner membrane. The catalysed reaction is [(1-&gt;4)-beta-D-glucosyl](n) + UDP-alpha-D-glucose = [(1-&gt;4)-beta-D-glucosyl](n+1) + UDP + H(+). The polypeptide is Cellulose synthase 2 (acsAII) (Novacetimonas hansenii (Komagataeibacter hansenii)).